The following is a 302-amino-acid chain: Recombination-associated protein RdgC (302 aa).

This sequence belongs to the RdgC family.

Its subcellular location is the cytoplasm. The protein resides in the nucleoid. May be involved in recombination. In Actinobacillus pleuropneumoniae serotype 5b (strain L20), this protein is Recombination-associated protein RdgC.